Consider the following 571-residue polypeptide: Glutamine--tRNA ligase (571 aa).

A 'HIGH' region motif is present at residues 35–45 (PEPNGYLHIGH). ATP is bound by residues 36-38 (EPN) and 42-48 (HIGHAKS). Residues Asp-68 and Tyr-213 each contribute to the L-glutamine site. ATP is bound by residues Thr-232, 262 to 263 (RL), and 270 to 272 (LSK). The short motif at 269-273 (ILSKR) is the 'KMSKS' region element.

This sequence belongs to the class-I aminoacyl-tRNA synthetase family. Monomer.

The protein resides in the cytoplasm. It carries out the reaction tRNA(Gln) + L-glutamine + ATP = L-glutaminyl-tRNA(Gln) + AMP + diphosphate. The chain is Glutamine--tRNA ligase from Buchnera aphidicola subsp. Acyrthosiphon pisum (strain Tuc7).